A 334-amino-acid chain; its full sequence is Malate dehydrogenase 2 (334 aa).

19–25 (IGAGKVG) provides a ligand contact to NAD(+). The substrate site is built by Arg-100 and Arg-106. Residues Asn-113 and 136–138 (VSN) contribute to the NAD(+) site. Asn-138 and Arg-169 together coordinate substrate. The active-site Proton acceptor is His-193.

It belongs to the LDH/MDH superfamily.

The catalysed reaction is (S)-malate + NAD(+) = oxaloacetate + NADH + H(+). Functionally, catalyzes the reversible oxidation of malate to oxaloacetate. The sequence is that of Malate dehydrogenase 2 from Aquifex aeolicus (strain VF5).